We begin with the raw amino-acid sequence, 53 residues long: ATP synthase F(0) complex subunit 8 (53 aa).

Residues 8-24 (PWLTTFLIVWISLIVIL) form a helical membrane-spanning segment.

Belongs to the ATPase protein 8 family. In terms of assembly, component of the ATP synthase complex composed at least of ATP5F1A/subunit alpha, ATP5F1B/subunit beta, ATP5MC1/subunit c (homooctomer), MT-ATP6/subunit a, MT-ATP8/subunit 8, ATP5ME/subunit e, ATP5MF/subunit f, ATP5MG/subunit g, ATP5MK/subunit k, ATP5MJ/subunit j, ATP5F1C/subunit gamma, ATP5F1D/subunit delta, ATP5F1E/subunit epsilon, ATP5PF/subunit F6, ATP5PB/subunit b, ATP5PD/subunit d, ATP5PO/subunit OSCP. ATP synthase complex consists of a soluble F(1) head domain (subunits alpha(3) and beta(3)) - the catalytic core - and a membrane F(0) domain - the membrane proton channel (subunits c, a, 8, e, f, g, k and j). These two domains are linked by a central stalk (subunits gamma, delta, and epsilon) rotating inside the F1 region and a stationary peripheral stalk (subunits F6, b, d, and OSCP).

It localises to the mitochondrion membrane. Subunit 8, of the mitochondrial membrane ATP synthase complex (F(1)F(0) ATP synthase or Complex V) that produces ATP from ADP in the presence of a proton gradient across the membrane which is generated by electron transport complexes of the respiratory chain. ATP synthase complex consist of a soluble F(1) head domain - the catalytic core - and a membrane F(1) domain - the membrane proton channel. These two domains are linked by a central stalk rotating inside the F(1) region and a stationary peripheral stalk. During catalysis, ATP synthesis in the catalytic domain of F(1) is coupled via a rotary mechanism of the central stalk subunits to proton translocation. In vivo, can only synthesize ATP although its ATP hydrolase activity can be activated artificially in vitro. Part of the complex F(0) domain. This is ATP synthase F(0) complex subunit 8 from Alligator mississippiensis (American alligator).